Here is a 436-residue protein sequence, read N- to C-terminus: Serine/threonine-protein kinase STK11 (436 aa).

S31 carries the post-translational modification Phosphoserine. N6-acetyllysine is present on residues K44 and K48. The interval L45 to N90 is sufficient for interaction with SIRT1. Residues Y49–F309 enclose the Protein kinase domain. ATP contacts are provided by residues L55 to V63 and K78. N6-acetyllysine is present on residues K96 and K97. D176 functions as the Proton acceptor in the catalytic mechanism. Residue T189 is modified to Phosphothreonine; by autocatalysis. K296 and K311 each carry N6-acetyllysine. S325 is modified (phosphoserine). T336 is subject to Phosphothreonine; by autocatalysis. Position 366 is a phosphothreonine; by ATM and autocatalysis (T366). The tract at residues T398–V421 is disordered. S403 is subject to Phosphoserine. K420 is subject to N6-acetyllysine. C422 carries the S-palmitoyl cysteine lipid modification. Position 426 is an N6-acetyllysine (K426). S431 carries the phosphoserine; by autocatalysis, PKA, PKC/PRKCZ and RPS6KA1 modification. C433 is subject to Cysteine methyl ester. A lipid anchor (S-farnesyl cysteine) is attached at C433. N6-acetyllysine is present on K434. A propeptide spans K434–Q436 (removed in mature form).

This sequence belongs to the protein kinase superfamily. CAMK Ser/Thr protein kinase family. LKB1 subfamily. Catalytic component of a trimeric complex composed of STK11/LKB1, STRAD (STRADA or STRADB) and CAB39/MO25 (CAB39/MO25alpha or CAB39L/MO25beta): the complex tethers STK11/LKB1 in the cytoplasm and stimulates its catalytic activity. Found in a ternary complex composed of SMAD4, STK11/LKB1 and STK11IP. Interacts with p53/TP53, SMAD4, STK11IP and WDR6. Interacts with NR4A1. Interacts with NISCH; this interaction may increase STK11 activity. Interacts with PTEN, leading to PTEN phosphorylation. Interacts with SIRT1; the interaction deacetylates STK11. Interacts with CDKN1A. It depends on Mg(2+) as a cofactor. Requires Mn(2+) as cofactor. In terms of processing, phosphorylated by ATM at Thr-366 following ionizing radiation (IR). Phosphorylation at Ser-431 by RPS6KA1 and/or some PKA is required to inhibit cell growth. Phosphorylation at Ser-431 is also required during neuronal polarization to mediate phosphorylation of BRSK1 and BRSK2. Phosphorylation by PKC/PRKCZ at Ser-399 in isoform 2 promotes metformin (or peroxynitrite)-induced nuclear export of STK11 and activation of AMPK. UV radiation-induced phosphorylation at Thr-366 mediates CDKN1A degradation. Post-translationally, acetylated. Deacetylation at Lys-48 enhances cytoplasmic localization and kinase activity in vitro. In terms of tissue distribution, widely expressed. Predominantly expressed in testis (at protein level). As to expression, expressed in adult brain and liver and absent from tissues derived from postnatal day 7.

The protein localises to the nucleus. Its subcellular location is the cytoplasm. It localises to the membrane. The protein resides in the mitochondrion. It catalyses the reaction L-seryl-[protein] + ATP = O-phospho-L-seryl-[protein] + ADP + H(+). It carries out the reaction L-threonyl-[protein] + ATP = O-phospho-L-threonyl-[protein] + ADP + H(+). Activated by forming a complex with STRAD (STRADA or STRADB) and CAB39/MO25 (CAB39/MO25alpha or CAB39L/MO25beta): STRADA (or STRADB)-binding promotes a conformational change of STK11/LKB1 in an active conformation, which is stabilized by CAB39/MO25alpha (or CAB39L/MO25beta) interacting with the STK11/LKB1 activation loop. Sequestration in the nucleus by NR4A1 prevents it from phosphorylating and activating cytoplasmic AMPK. Its function is as follows. Tumor suppressor serine/threonine-protein kinase that controls the activity of AMP-activated protein kinase (AMPK) family members, thereby playing a role in various processes such as cell metabolism, cell polarity, apoptosis and DNA damage response. Acts by phosphorylating the T-loop of AMPK family proteins, thus promoting their activity: phosphorylates PRKAA1, PRKAA2, BRSK1, BRSK2, MARK1, MARK2, MARK3, MARK4, NUAK1, NUAK2, SIK1, SIK2, SIK3 and SNRK but not MELK. Also phosphorylates non-AMPK family proteins such as STRADA, PTEN and possibly p53/TP53. Acts as a key upstream regulator of AMPK by mediating phosphorylation and activation of AMPK catalytic subunits PRKAA1 and PRKAA2 and thereby regulates processes including: inhibition of signaling pathways that promote cell growth and proliferation when energy levels are low, glucose homeostasis in liver, activation of autophagy when cells undergo nutrient deprivation, and B-cell differentiation in the germinal center in response to DNA damage. Also acts as a regulator of cellular polarity by remodeling the actin cytoskeleton. Required for cortical neuron polarization by mediating phosphorylation and activation of BRSK1 and BRSK2, leading to axon initiation and specification. Involved in DNA damage response: interacts with p53/TP53 and recruited to the CDKN1A/WAF1 promoter to participate in transcription activation. Able to phosphorylate p53/TP53; the relevance of such result in vivo is however unclear and phosphorylation may be indirect and mediated by downstream STK11/LKB1 kinase NUAK1. Also acts as a mediator of p53/TP53-dependent apoptosis via interaction with p53/TP53: translocates to the mitochondrion during apoptosis and regulates p53/TP53-dependent apoptosis pathways. Regulates UV radiation-induced DNA damage response mediated by CDKN1A. In association with NUAK1, phosphorylates CDKN1A in response to UV radiation and contributes to its degradation which is necessary for optimal DNA repair. Has a role in spermiogenesis. The sequence is that of Serine/threonine-protein kinase STK11 from Mus musculus (Mouse).